The sequence spans 181 residues: Large ribosomal subunit protein uL6 (181 aa).

The protein belongs to the universal ribosomal protein uL6 family. In terms of assembly, part of the 50S ribosomal subunit.

In terms of biological role, this protein binds to the 23S rRNA, and is important in its secondary structure. It is located near the subunit interface in the base of the L7/L12 stalk, and near the tRNA binding site of the peptidyltransferase center. The polypeptide is Large ribosomal subunit protein uL6 (Lawsonia intracellularis (strain PHE/MN1-00)).